A 286-amino-acid chain; its full sequence is L-cysteine S-thiosulfotransferase subunit SoxA (286 aa).

Residues 1-28 (MKKTIQRGLFTGALVLLTAMTSKPAHAA) form the signal peptide. Cys-106 and Cys-137 are disulfide-bonded. The Cytochrome c domain maps to 180-286 (DAYMKGKEMF…LKFNGPASRK (107 aa)). Heme is bound by residues Cys-200 and His-204. Arg-243 is a binding site for substrate. Cys-247 lines the heme pocket. Cys-247 functions as the Cysteine persulfide intermediate in the catalytic mechanism.

This sequence belongs to the SoxA family. In terms of assembly, heterodimer of SoxA and SoxX. The SoxAX complex interacts with CT1020, SoxAX-binding protein SaxB (SoxK); this interaction stimulates catalytic activity of the complex. Heme is required as a cofactor. Cysteine persulfide at Cys-247.

It localises to the periplasm. It catalyses the reaction L-cysteinyl-[SoxY protein] + thiosulfate + 2 Fe(III)-[cytochrome c] = S-sulfosulfanyl-L-cysteinyl-[SoxY protein] + 2 Fe(II)-[cytochrome c] + 2 H(+). It carries out the reaction S-sulfanyl-L-cysteinyl-[SoxY protein] + thiosulfate + 2 Fe(III)-[cytochrome c] = S-(2-sulfodisulfanyl)-L-cysteinyl-[SoxY protein] + 2 Fe(II)-[cytochrome c] + 2 H(+). In terms of biological role, C-type monoheme cytochrome, which is part of the SoxAX cytochrome complex involved in sulfur oxidation. The SoxAX complex catalyzes the formation of a heterodisulfide bond between the conserved cysteine residue on a sulfur carrier SoxYZ complex subunit SoxY and thiosulfate or other inorganic sulfur substrates. This leads to the liberation of two electrons, which may be transferred from the SoxAX complex to another cytochrome c and which then may be used for reductive CO(2) fixation. The polypeptide is L-cysteine S-thiosulfotransferase subunit SoxA (Chlorobaculum thiosulfatiphilum (Chlorobium limicola f.sp. thiosulfatophilum)).